The following is a 484-amino-acid chain: Aspartyl/glutamyl-tRNA(Asn/Gln) amidotransferase subunit B (484 aa).

It belongs to the GatB/GatE family. GatB subfamily. As to quaternary structure, heterotrimer of A, B and C subunits.

The catalysed reaction is L-glutamyl-tRNA(Gln) + L-glutamine + ATP + H2O = L-glutaminyl-tRNA(Gln) + L-glutamate + ADP + phosphate + H(+). The enzyme catalyses L-aspartyl-tRNA(Asn) + L-glutamine + ATP + H2O = L-asparaginyl-tRNA(Asn) + L-glutamate + ADP + phosphate + 2 H(+). In terms of biological role, allows the formation of correctly charged Asn-tRNA(Asn) or Gln-tRNA(Gln) through the transamidation of misacylated Asp-tRNA(Asn) or Glu-tRNA(Gln) in organisms which lack either or both of asparaginyl-tRNA or glutaminyl-tRNA synthetases. The reaction takes place in the presence of glutamine and ATP through an activated phospho-Asp-tRNA(Asn) or phospho-Glu-tRNA(Gln). In Anaeromyxobacter sp. (strain K), this protein is Aspartyl/glutamyl-tRNA(Asn/Gln) amidotransferase subunit B.